Reading from the N-terminus, the 132-residue chain is RuBisCO chaperone RbcX (132 aa).

The interval 110 to 132 (HLSLSNPSPESEQQTISDTDWDH) is disordered. A compositionally biased stretch (polar residues) spans 111–132 (LSLSNPSPESEQQTISDTDWDH).

It belongs to the RbcX family. Homodimer. Interacts with the exposed C-terminal peptide of RbcL via its central cleft, contacts a second RbcL monomer via its peripheral polar surface. RbcX and Raf1 can bind simultaneously to RbcL.

The protein localises to the carboxysome. It localises to the cytoplasm. Its function is as follows. An RbcL-specific chaperone. The central cleft of the RbcX homodimer (RbcX2) binds the C-terminus of an RbcL monomer, stabilizing the C-terminus and probably preventing its reassociation with chaperonin GroEL-ES. At the same time the peripheral region of RbcX2 binds a second RbcL monomer, bridging the RbcL homodimers in the correct orientation. The RbcX2(2)-bound RbcL dimers then assemble into the RbcL8 core (RbcL8-(RbcX2)8). RbcS binding triggers the release of RbcX2. In terms of biological role, when rbcL-rbcX-rbcS or rbcL-rbcS were overexpressed in E.coli no change in reconstituted RuBisCO activity was observed, which suggests RbcX plays no role in RuBisCO assembly in this system. However in PubMed:8472962 E.coli chaperones groL and groS were also overexpressed, which may compensate for lack of rbcX. The protein is RuBisCO chaperone RbcX of Nostoc sp. (strain PCC 7120 / SAG 25.82 / UTEX 2576).